Here is a 434-residue protein sequence, read N- to C-terminus: Glutamate-1-semialdehyde 2,1-aminomutase 1 (434 aa).

An N6-(pyridoxal phosphate)lysine modification is found at Lys270.

The protein belongs to the class-III pyridoxal-phosphate-dependent aminotransferase family. HemL subfamily. In terms of assembly, homodimer. The cofactor is pyridoxal 5'-phosphate.

Its subcellular location is the cytoplasm. It carries out the reaction (S)-4-amino-5-oxopentanoate = 5-aminolevulinate. It participates in porphyrin-containing compound metabolism; protoporphyrin-IX biosynthesis; 5-aminolevulinate from L-glutamyl-tRNA(Glu): step 2/2. The protein is Glutamate-1-semialdehyde 2,1-aminomutase 1 of Bacillus cereus (strain ATCC 10987 / NRS 248).